The primary structure comprises 347 residues: Ribosomal RNA large subunit methyltransferase M (347 aa).

S-adenosyl-L-methionine-binding positions include S184, 217–220, D236, D256, and D272; that span reads APGG. Residue K301 is the Proton acceptor of the active site.

It belongs to the class I-like SAM-binding methyltransferase superfamily. RNA methyltransferase RlmE family. RlmM subfamily. Monomer.

It is found in the cytoplasm. The enzyme catalyses cytidine(2498) in 23S rRNA + S-adenosyl-L-methionine = 2'-O-methylcytidine(2498) in 23S rRNA + S-adenosyl-L-homocysteine + H(+). Its function is as follows. Catalyzes the 2'-O-methylation at nucleotide C2498 in 23S rRNA. This Xanthomonas euvesicatoria pv. vesicatoria (strain 85-10) (Xanthomonas campestris pv. vesicatoria) protein is Ribosomal RNA large subunit methyltransferase M.